A 461-amino-acid chain; its full sequence is Bifunctional protein GlmU (461 aa).

A pyrophosphorylase region spans residues 1–234; it reads MSLSVVILAA…EIEVEGANNR (234 aa). Residues 8 to 11, lysine 22, glutamine 77, 82 to 83, 104 to 106, glycine 141, glutamate 159, asparagine 174, and asparagine 232 contribute to the UDP-N-acetyl-alpha-D-glucosamine site; these read LAAG, GT, and YGD. Aspartate 106 is a Mg(2+) binding site. Asparagine 232 is a binding site for Mg(2+). The interval 235-255 is linker; sequence VQLATLERAYQARIAEELMIA. An N-acetyltransferase region spans residues 256-461; the sequence is GASLRDPARI…AGWQRPVKKS (206 aa). Residues arginine 338 and lysine 356 each contribute to the UDP-N-acetyl-alpha-D-glucosamine site. Histidine 368 serves as the catalytic Proton acceptor. Positions 371 and 382 each coordinate UDP-N-acetyl-alpha-D-glucosamine. Acetyl-CoA contacts are provided by residues alanine 385, 391-392, serine 410, alanine 428, and arginine 445; that span reads NY.

In the N-terminal section; belongs to the N-acetylglucosamine-1-phosphate uridyltransferase family. The protein in the C-terminal section; belongs to the transferase hexapeptide repeat family. In terms of assembly, homotrimer. Mg(2+) serves as cofactor.

The protein localises to the cytoplasm. The enzyme catalyses alpha-D-glucosamine 1-phosphate + acetyl-CoA = N-acetyl-alpha-D-glucosamine 1-phosphate + CoA + H(+). It carries out the reaction N-acetyl-alpha-D-glucosamine 1-phosphate + UTP + H(+) = UDP-N-acetyl-alpha-D-glucosamine + diphosphate. The protein operates within nucleotide-sugar biosynthesis; UDP-N-acetyl-alpha-D-glucosamine biosynthesis; N-acetyl-alpha-D-glucosamine 1-phosphate from alpha-D-glucosamine 6-phosphate (route II): step 2/2. It functions in the pathway nucleotide-sugar biosynthesis; UDP-N-acetyl-alpha-D-glucosamine biosynthesis; UDP-N-acetyl-alpha-D-glucosamine from N-acetyl-alpha-D-glucosamine 1-phosphate: step 1/1. Its pathway is bacterial outer membrane biogenesis; LPS lipid A biosynthesis. Its function is as follows. Catalyzes the last two sequential reactions in the de novo biosynthetic pathway for UDP-N-acetylglucosamine (UDP-GlcNAc). The C-terminal domain catalyzes the transfer of acetyl group from acetyl coenzyme A to glucosamine-1-phosphate (GlcN-1-P) to produce N-acetylglucosamine-1-phosphate (GlcNAc-1-P), which is converted into UDP-GlcNAc by the transfer of uridine 5-monophosphate (from uridine 5-triphosphate), a reaction catalyzed by the N-terminal domain. This Colwellia psychrerythraea (strain 34H / ATCC BAA-681) (Vibrio psychroerythus) protein is Bifunctional protein GlmU.